The chain runs to 435 residues: Cytochrome c biogenesis protein Ccs1 (435 aa).

Helical transmembrane passes span 17–37 (LSLS…GTII), 77–97 (NPCF…CTFS), and 163–183 (IAPI…LISL).

The protein belongs to the Ccs1/CcsB family. As to quaternary structure, may interact with CcsA.

The protein localises to the plastid. It localises to the chloroplast thylakoid membrane. Required during biogenesis of c-type cytochromes (cytochrome c6 and cytochrome f) at the step of heme attachment. This is Cytochrome c biogenesis protein Ccs1 from Gracilaria tenuistipitata var. liui (Red alga).